Here is a 560-residue protein sequence, read N- to C-terminus: Membrane-bound O-acyltransferase GUP1 (560 aa).

Over 1 to 43 the chain is Extracellular; sequence MSLISILSPLITSEGLDSRIKPSPKKDASTTTKPSLWKTTEFK. A helical membrane pass occupies residues 44 to 64; the sequence is FYYIAFLVVVPLMFYAGLQAS. Residues 65 to 101 are Cytoplasmic-facing; it reads SPENPNYARYERLLSQGWLFGRKVDNSDSQYRFFRDN. A helical transmembrane segment spans residues 102-122; that stretch reads FALLSVLMLVHTSIKRIVLYS. Residues 123–131 lie on the Extracellular side of the membrane; the sequence is TNITKLRFD. The helical transmembrane segment at 132–152 threads the bilayer; sequence LIFGLIFLVAAHGVNSIRILA. Residues 153–165 are Cytoplasmic-facing; it reads HMLILYAIAHVLK. A helical membrane pass occupies residues 166 to 185; the sequence is NFRRIATISIWIYGISTLFI. The Extracellular portion of the chain corresponds to 186–276; it reads NDNFRAYPFG…AAHPIQDYSL (91 aa). The helical transmembrane segment at 277 to 297 threads the bilayer; the sequence is MNYIAYVTYTPLFIAGPIITF. The Cytoplasmic segment spans residues 298 to 322; that stretch reads NDYVYQSKHTLPSINFKFIFYYAVR. The helical transmembrane segment at 323–343 threads the bilayer; that stretch reads FVIALLSMEFILHFLHVVAIS. Over 344-352 the chain is Extracellular; sequence KTKAWENDT. A helical membrane pass occupies residues 353-373; sequence PFQISMIGLFNLNIIWLKLLI. At 374 to 432 the chain is on the cytoplasmic side; the sequence is PWRLFRLWALLDGIDTPENMIRCVDNNYSSLAFWRAWHRSYNKWVVRYIYIPLGGSKNR. 2 helical membrane-spanning segments follow: residues 433–453 and 454–474; these read VLTS…ELKL and LLWG…TQIF. The active site involves His-447. At 475-485 the chain is on the cytoplasmic side; the sequence is SHYTDAVWYRH. A helical membrane pass occupies residues 486-506; it reads VCAVGAVFNIWVMMIANLFGF. Residues 507 to 526 are Extracellular-facing; sequence CLGSDGTKKLLSDMFCTVSG. Residues 527–547 traverse the membrane as a helical segment; it reads FKFVILASVSLFIAVQIMFEI. At 548–560 the chain is on the cytoplasmic side; that stretch reads REEEKRHGIYLKC.

The protein belongs to the membrane-bound acyltransferase family. In terms of assembly, interacts with mitochondrial outer membrane voltage-dependent anion channel (VDAC) POR1.

The protein resides in the cell membrane. Its subcellular location is the endoplasmic reticulum membrane. The protein localises to the mitochondrion membrane. Membrane-bound O-acyltransferase involved in the remodeling of glycosylphosphatidylinositol (GPI) anchors. Acts only on GPI-anchored proteins, but not on free GPI lipids. Acts as an acyltransferase for GPI anchors that adds C26 fatty acids to the sn2 position of lyso-PI-containing GPI anchors. PER1 first deacylates, GUP1 subsequently reacylates the anchor lipid, thus replacing a shorter fatty acid (C16:0 or C18:0) by C26:0. Also involved in lipid metabolism, having profound effects on sphingolipid-sterol-ordered domains integrity and assembly. Together with GUP2, has an influence on the chemical composition of the yeast extracellular matrix (yECM) in yeast multicellular aggregates, such as biofilms and colonies. Involved in cell integrity and apoptosis. The sequence is that of Membrane-bound O-acyltransferase GUP1 (GUP1) from Saccharomyces cerevisiae (strain ATCC 204508 / S288c) (Baker's yeast).